Reading from the N-terminus, the 1024-residue chain is Beta-galactosidase (1024 aa).

Positions 103 and 202 each coordinate substrate. Position 202 (D202) interacts with Na(+). 3 residues coordinate Mg(2+): E417, H419, and E462. Substrate contacts are provided by residues E462 and 538 to 541; that span reads EYAH. E462 (proton donor) is an active-site residue. E538 (nucleophile) is an active-site residue. N598 provides a ligand contact to Mg(2+). The Na(+) site is built by F602 and N605. Substrate contacts are provided by N605 and W1000.

This sequence belongs to the glycosyl hydrolase 2 family. As to quaternary structure, homotetramer. Mg(2+) serves as cofactor. Na(+) is required as a cofactor.

The enzyme catalyses Hydrolysis of terminal non-reducing beta-D-galactose residues in beta-D-galactosides.. The sequence is that of Beta-galactosidase from Escherichia coli O157:H7.